The primary structure comprises 122 residues: Large ribosomal subunit protein uL14 (122 aa).

Belongs to the universal ribosomal protein uL14 family. In terms of assembly, part of the 50S ribosomal subunit. Forms a cluster with proteins L3 and L19. In the 70S ribosome, L14 and L19 interact and together make contacts with the 16S rRNA in bridges B5 and B8.

In terms of biological role, binds to 23S rRNA. Forms part of two intersubunit bridges in the 70S ribosome. The polypeptide is Large ribosomal subunit protein uL14 (Mycoplasma genitalium (strain ATCC 33530 / DSM 19775 / NCTC 10195 / G37) (Mycoplasmoides genitalium)).